The primary structure comprises 369 residues: Molybdenum import ATP-binding protein ModC (369 aa).

An ABC transporter domain is found at 3 to 246 (TRPEQASKDT…LDLPLAHGDS (244 aa)). 44–51 (GPSGSGKT) serves as a coordination point for ATP. Positions 305–369 (DTSILNILPA…AQIKGVAILG (65 aa)) constitute a Mop domain.

Belongs to the ABC transporter superfamily. Molybdate importer (TC 3.A.1.8) family. As to quaternary structure, the complex is composed of two ATP-binding proteins (ModC), two transmembrane proteins (ModB) and a solute-binding protein (ModA).

Its subcellular location is the cell inner membrane. It catalyses the reaction molybdate(out) + ATP + H2O = molybdate(in) + ADP + phosphate + H(+). Functionally, part of the ABC transporter complex ModABC involved in molybdenum import. Responsible for energy coupling to the transport system. This Albidiferax ferrireducens (strain ATCC BAA-621 / DSM 15236 / T118) (Rhodoferax ferrireducens) protein is Molybdenum import ATP-binding protein ModC.